The following is a 198-amino-acid chain: uncharacterized protein (198 aa).

Residues 1–23 (MYFGKTRQSDQSGRVPPNQNVTT) form a disordered region. A compositionally biased stretch (polar residues) spans 9 to 23 (SDQSGRVPPNQNVTT). Residues Cys-75, His-144, and Arg-149 each contribute to the Mo-molybdopterin site.

The cofactor is Mo-molybdopterin.

This is an uncharacterized protein from Bacillus subtilis (strain 168).